Reading from the N-terminus, the 157-residue chain is UPF0262 protein RHECIAT_CH0000657 (157 aa).

This sequence belongs to the UPF0262 family.

In Rhizobium etli (strain CIAT 652), this protein is UPF0262 protein RHECIAT_CH0000657.